Here is a 102-residue protein sequence, read N- to C-terminus: Urease subunit beta (102 aa).

Belongs to the urease beta subunit family. As to quaternary structure, heterotrimer of UreA (gamma), UreB (beta) and UreC (alpha) subunits. Three heterotrimers associate to form the active enzyme.

It localises to the cytoplasm. It catalyses the reaction urea + 2 H2O + H(+) = hydrogencarbonate + 2 NH4(+). It functions in the pathway nitrogen metabolism; urea degradation; CO(2) and NH(3) from urea (urease route): step 1/1. In Clostridium perfringens, this protein is Urease subunit beta.